The chain runs to 350 residues: Uroporphyrinogen decarboxylase (350 aa).

Substrate is bound by residues 27 to 31 (RQAGR), phenylalanine 46, aspartate 76, tyrosine 152, serine 207, and histidine 321.

Belongs to the uroporphyrinogen decarboxylase family. Homodimer.

The protein resides in the cytoplasm. The catalysed reaction is uroporphyrinogen III + 4 H(+) = coproporphyrinogen III + 4 CO2. The protein operates within porphyrin-containing compound metabolism; protoporphyrin-IX biosynthesis; coproporphyrinogen-III from 5-aminolevulinate: step 4/4. Functionally, catalyzes the decarboxylation of four acetate groups of uroporphyrinogen-III to yield coproporphyrinogen-III. The sequence is that of Uroporphyrinogen decarboxylase from Listeria innocua serovar 6a (strain ATCC BAA-680 / CLIP 11262).